Reading from the N-terminus, the 440-residue chain is APO protein 2, chloroplastic (440 aa).

The transit peptide at 1–62 (MSITYSAISF…SLQLNSRVVL (62 aa)) directs the protein to the chloroplast. Positions 106–115 (ARERVKNNKD) are enriched in basic and acidic residues. Residues 106 to 126 (ARERVKNNKDKPKRPLPPPKN) form a disordered region. APO domains are found at residues 162-247 (ACGW…EIPE) and 332-417 (VCGY…VVPE).

This sequence belongs to the APO family.

It localises to the plastid. The protein resides in the chloroplast. Functionally, may be involved in the stable assembly of several 4Fe-4S cluster-containing complexes of chloroplasts. The protein is APO protein 2, chloroplastic (APO2) of Arabidopsis thaliana (Mouse-ear cress).